The following is a 103-amino-acid chain: MSFAPPPDYSKIYLALGCGLGLGFVVYASRVNHLPHVGDNTHNLPHGGQYCDGNKRVLYSGPKSGSSPTNNLWPFITVIALTLAILLTSCPRRRVCIRCSQHH.

Topologically, residues 1 to 8 (MSFAPPPD) are cytoplasmic. The chain crosses the membrane as a helical span at residues 9-29 (YSKIYLALGCGLGLGFVVYAS). The Lumenal segment spans residues 30-70 (RVNHLPHVGDNTHNLPHGGQYCDGNKRVLYSGPKSGSSPTN). The helical transmembrane segment at 71–91 (NLWPFITVIALTLAILLTSCP) threads the bilayer. Over 92-103 (RRRVCIRCSQHH) the chain is Cytoplasmic.

Belongs to the Tymovirales TGBp2 protein family.

The protein resides in the host endoplasmic reticulum membrane. In terms of biological role, plays a role in viral cell-to-cell propagation, by facilitating genome transport to neighboring plant cells through plasmosdesmata,. The protein is Movement protein TGB2 of Allium cepa var. aggregatum (Shallot).